We begin with the raw amino-acid sequence, 177 residues long: Anditomin synthesis protein L (177 aa).

2 helical membrane passes run 54–74 (VVNS…PFIM) and 117–137 (IVNF…YMVF). N-linked (GlcNAc...) asparagine glycosylation is present at Asn165.

It is found in the membrane. The protein operates within secondary metabolite biosynthesis; terpenoid biosynthesis. In terms of biological role, part of the gene cluster that mediates the biosynthesis of anditomin, a fungal meroterpenoid. The first step of the pathway is the synthesis of 3,5-dimethylorsellinic acid (DMOA) by the polyketide synthase andM. DMOA is then converted to the phthalide compound 5,7-dihydroxy-4,6-dimethylphthalide (DHDMP) by the cytochrome P450 monooxygenase andK, which is further prenylated by the prenyltransferase andD to yield farnesyl-DHDMP. Further epoxidation by the FAD-dependent monooxygenase andE leads to epoxyfarnesyl-DHDMP. The next step involves the terpene cyclase andB that converts epoxyfarnesyl-DHDMP into preandiloid A through opening of the epoxide ring followed by the cyclization of the farnesyl moiety. Preandiloid A is in turn oxidized at the C-3 hydroxyl group to yield preandiloid B by the dehydrogenase andC. The dioxygenase andA is solely responsible for the dehydrogenation of preandiloid B leading to the enone preandiloid C, as well as for the intriguing structural rearrangement to generate the bicyclo[2.2.2]octane core, transforming preandiloid C into andiconin. FAD-binding monooxygenase andJ then produces andilesin D which is reduced by dehydrogenase andI to yield andilesin A. Action of acetyltransferase andG followed by a spontaneous acetate elimination leads then to andilesin B, which is in turn substrate of the short chain dehydrogenase andH to yield andilesin C. Finally, the dioxygenase andF catalyzes the transformation of andilesin C to anditomin. The exact role of andL within the anditomin biosynthetic pathway has not been identified yet. The polypeptide is Anditomin synthesis protein L (Emericella variicolor (Aspergillus stellatus)).